Here is a 208-residue protein sequence, read N- to C-terminus: Outer-membrane lipoprotein carrier protein (208 aa).

A signal peptide spans 1-21; sequence MKRTATLLVVALILALNTAQA.

Belongs to the LolA family. In terms of assembly, monomer.

It localises to the periplasm. Its function is as follows. Participates in the translocation of lipoproteins from the inner membrane to the outer membrane. Only forms a complex with a lipoprotein if the residue after the N-terminal Cys is not an aspartate (The Asp acts as a targeting signal to indicate that the lipoprotein should stay in the inner membrane). This chain is Outer-membrane lipoprotein carrier protein, found in Halorhodospira halophila (strain DSM 244 / SL1) (Ectothiorhodospira halophila (strain DSM 244 / SL1)).